The following is a 303-amino-acid chain: Small ribosomal subunit protein uS2 (303 aa).

Positions 267–303 (AESLSMAEEPAPPSQRKGPASETAEPVAEPAVTESGS) are disordered.

This sequence belongs to the universal ribosomal protein uS2 family.

The sequence is that of Small ribosomal subunit protein uS2 from Solibacter usitatus (strain Ellin6076).